The sequence spans 357 residues: Quinolinate synthase (357 aa).

Residues histidine 50 and serine 71 each contribute to the iminosuccinate site. [4Fe-4S] cluster is bound at residue cysteine 116. Residues 142-144 (YAN) and serine 159 each bind iminosuccinate. Residue cysteine 203 coordinates [4Fe-4S] cluster. Iminosuccinate contacts are provided by residues 229 to 231 (HPE) and threonine 246. [4Fe-4S] cluster is bound at residue cysteine 300.

The protein belongs to the quinolinate synthase family. Type 1 subfamily. It depends on [4Fe-4S] cluster as a cofactor.

The protein resides in the cytoplasm. The catalysed reaction is iminosuccinate + dihydroxyacetone phosphate = quinolinate + phosphate + 2 H2O + H(+). It participates in cofactor biosynthesis; NAD(+) biosynthesis; quinolinate from iminoaspartate: step 1/1. Functionally, catalyzes the condensation of iminoaspartate with dihydroxyacetone phosphate to form quinolinate. The sequence is that of Quinolinate synthase from Shewanella sp. (strain ANA-3).